The chain runs to 201 residues: Musculin (201 aa).

Disordered regions lie at residues M1–N108 and R182–A201. Acidic residues predominate over residues S46–P56. The Nuclear localization signal signature appears at K66–R71. Positions D74–G86 are enriched in gly residues. The 53-residue stretch at S102–L154 folds into the bHLH domain.

As to quaternary structure, efficient DNA binding requires dimerization with another bHLH protein. Binds DNA as a homodimer or a heterodimer. Forms a heterodimer with TCF3.

Its subcellular location is the nucleus. Transcription repressor that blocks myogenesis and activation of E-box dependent muscle genes. This Mus musculus (Mouse) protein is Musculin (Msc).